A 474-amino-acid chain; its full sequence is Glutathione synthetase (474 aa).

A2 carries the N-acetylalanine modification. R125 is a binding site for substrate. E144 lines the ATP pocket. Residues E144 and N146 each coordinate Mg(2+). Substrate is bound by residues 148–151 (ISAS), 214–216 (ERN), Q220, and 267–270 (RDGY). ATP is bound by residues K305, 364 to 373 (KPQREGGGNN), Y375, and 398 to 401 (MEKT). E368 contacts Mg(2+). Position 415 is a phosphoserine (S415). An ATP-binding site is contributed by E425. R450 provides a ligand contact to substrate. ATP contacts are provided by K452 and D458. Residue 461–462 (VA) participates in substrate binding.

The protein belongs to the eukaryotic GSH synthase family. In terms of assembly, homodimer. Requires Mg(2+) as cofactor.

The catalysed reaction is gamma-L-glutamyl-L-cysteine + glycine + ATP = glutathione + ADP + phosphate + H(+). It functions in the pathway sulfur metabolism; glutathione biosynthesis; glutathione from L-cysteine and L-glutamate: step 2/2. Catalyzes the production of glutathione from gamma-glutamylcysteine and glycine in an ATP-dependent manner. Glutathione (gamma-glutamylcysteinylglycine, GSH) is the most abundant intracellular thiol in living aerobic cells and is required for numerous processes including the protection of cells against oxidative damage, amino acid transport, the detoxification of foreign compounds, the maintenance of protein sulfhydryl groups in a reduced state and acts as a cofactor for a number of enzymes. The chain is Glutathione synthetase (GSS) from Macaca fascicularis (Crab-eating macaque).